We begin with the raw amino-acid sequence, 552 residues long: Carboxypeptidase Y homolog A (552 aa).

The N-terminal stretch at 1–17 (MRVLPATLLVGAATAAT) is a signal peptide. The propeptide occupies 18 to 133 (PAQQVLGGLQ…KLEAYDLRIK (116 aa)). Intrachain disulfides connect Cys-188–Cys-428, Cys-322–Cys-336, Cys-346–Cys-369, Cys-353–Cys-362, and Cys-391–Cys-398. Asn-219 carries N-linked (GlcNAc...) asparagine glycosylation. Ser-275 is a catalytic residue. The active site involves Asp-467. Asn-518 carries an N-linked (GlcNAc...) asparagine glycan. The active site involves His-529.

The protein belongs to the peptidase S10 family.

It localises to the vacuole. It catalyses the reaction Release of a C-terminal amino acid with broad specificity.. Vacuolar carboxypeptidase involved in degradation of small peptides. Digests preferentially peptides containing an aliphatic or hydrophobic residue in P1' position, as well as methionine, leucine or phenylalanine in P1 position of ester substrate. In Emericella nidulans (strain FGSC A4 / ATCC 38163 / CBS 112.46 / NRRL 194 / M139) (Aspergillus nidulans), this protein is Carboxypeptidase Y homolog A (cpyA).